Consider the following 146-residue polypeptide: Large ribosomal subunit protein bL21 (146 aa).

The tract at residues Lys115–Asn146 is disordered. Residues Ala128 to Asn146 are compositionally biased toward basic and acidic residues.

It belongs to the bacterial ribosomal protein bL21 family. Part of the 50S ribosomal subunit. Contacts protein L20.

This protein binds to 23S rRNA in the presence of protein L20. The sequence is that of Large ribosomal subunit protein bL21 from Prochlorococcus marinus (strain MIT 9312).